The chain runs to 253 residues: Sec-independent protein translocase protein TatC (253 aa).

The next 6 helical transmembrane spans lie at 18-38 (VSVG…KSIF), 69-89 (AIVI…APGL), 96-116 (VILP…AFSY), 151-171 (LILG…LAKV), 187-207 (IVVI…SQIF), and 208-228 (MALP…MVNP). The tract at residues 231-253 (KDNENNNENNNENNTKENTKSES) is disordered. Over residues 244-253 (NTKENTKSES) the composition is skewed to basic and acidic residues.

The protein belongs to the TatC family. In terms of assembly, the Tat system comprises two distinct complexes: a TatABC complex, containing multiple copies of TatA, TatB and TatC subunits, and a separate TatA complex, containing only TatA subunits. Substrates initially bind to the TatABC complex, which probably triggers association of the separate TatA complex to form the active translocon.

It is found in the cell inner membrane. Part of the twin-arginine translocation (Tat) system that transports large folded proteins containing a characteristic twin-arginine motif in their signal peptide across membranes. Together with TatB, TatC is part of a receptor directly interacting with Tat signal peptides. This chain is Sec-independent protein translocase protein TatC, found in Helicobacter pylori (strain ATCC 700392 / 26695) (Campylobacter pylori).